The primary structure comprises 339 residues: Nicotinate-nucleotide--dimethylbenzimidazole phosphoribosyltransferase (339 aa).

Glutamate 306 (proton acceptor) is an active-site residue.

The protein belongs to the CobT family.

The catalysed reaction is 5,6-dimethylbenzimidazole + nicotinate beta-D-ribonucleotide = alpha-ribazole 5'-phosphate + nicotinate + H(+). It functions in the pathway nucleoside biosynthesis; alpha-ribazole biosynthesis; alpha-ribazole from 5,6-dimethylbenzimidazole: step 1/2. Functionally, catalyzes the synthesis of alpha-ribazole-5'-phosphate from nicotinate mononucleotide (NAMN) and 5,6-dimethylbenzimidazole (DMB). The protein is Nicotinate-nucleotide--dimethylbenzimidazole phosphoribosyltransferase of Brucella melitensis biotype 2 (strain ATCC 23457).